Reading from the N-terminus, the 615-residue chain is Elongation factor 4 (615 aa).

Residues 14–200 form the tr-type G domain; the sequence is QQIRNFCIIA…KVAELIPAPT (187 aa). Residues 26–31 and 147–150 contribute to the GTP site; these read DHGKST and NKID.

The protein belongs to the TRAFAC class translation factor GTPase superfamily. Classic translation factor GTPase family. LepA subfamily.

It is found in the cell membrane. It carries out the reaction GTP + H2O = GDP + phosphate + H(+). Functionally, required for accurate and efficient protein synthesis under certain stress conditions. May act as a fidelity factor of the translation reaction, by catalyzing a one-codon backward translocation of tRNAs on improperly translocated ribosomes. Back-translocation proceeds from a post-translocation (POST) complex to a pre-translocation (PRE) complex, thus giving elongation factor G a second chance to translocate the tRNAs correctly. Binds to ribosomes in a GTP-dependent manner. This Corynebacterium diphtheriae (strain ATCC 700971 / NCTC 13129 / Biotype gravis) protein is Elongation factor 4.